A 246-amino-acid chain; its full sequence is Auxin-responsive protein IAA25 (246 aa).

Residues 1–22 (MKSSSVAPRLKQERQDDCKFQE) form a disordered region. The segment covering 10–22 (LKQERQDDCKFQE) has biased composition (basic and acidic residues). Residues 28 to 32 (LELRL) carry the EAR-like (transcriptional repression) motif. Positions 143-238 (TMFVKVNLEG…SVKRLYIAQD (96 aa)) constitute a PB1 domain.

It belongs to the Aux/IAA family. In terms of assembly, homodimers and heterodimers. In terms of tissue distribution, highly expressed in flowers. Expressed in roots and seedlings.

Its subcellular location is the nucleus. Its function is as follows. Aux/IAA proteins are short-lived transcriptional factors that function as repressors of early auxin response genes at low auxin concentrations. This is Auxin-responsive protein IAA25 (IAA25) from Oryza sativa subsp. japonica (Rice).